The sequence spans 318 residues: Transaldolase (318 aa).

The active-site Schiff-base intermediate with substrate is Lys-132.

The protein belongs to the transaldolase family. Type 1 subfamily. As to quaternary structure, homodimer.

The protein resides in the cytoplasm. The catalysed reaction is D-sedoheptulose 7-phosphate + D-glyceraldehyde 3-phosphate = D-erythrose 4-phosphate + beta-D-fructose 6-phosphate. It functions in the pathway carbohydrate degradation; pentose phosphate pathway; D-glyceraldehyde 3-phosphate and beta-D-fructose 6-phosphate from D-ribose 5-phosphate and D-xylulose 5-phosphate (non-oxidative stage): step 2/3. Functionally, transaldolase is important for the balance of metabolites in the pentose-phosphate pathway. In Shewanella sp. (strain MR-7), this protein is Transaldolase.